The primary structure comprises 2136 residues: U5 small nuclear ribonucleoprotein 200 kDa helicase (2136 aa).

Residues S17 and S26 each carry the phosphoserine modification. The segment at 39–81 is disordered; it reads EVLSLVGKLEGTRMGDKAQRTKPQMQEERRAKRRKRDEDRHDM. Residue K46 forms a Glycyl lysine isopeptide (Lys-Gly) (interchain with G-Cter in SUMO2) linkage. The span at 48-81 shows a compositional bias: basic and acidic residues; the sequence is EGTRMGDKAQRTKPQMQEERRAKRRKRDEDRHDM. Residues 54 to 84 adopt a coiled-coil conformation; it reads DKAQRTKPQMQEERRAKRRKRDEDRHDMNKM. The residue at position 225 (S225) is a Phosphoserine. Phosphothreonine is present on T389. The interval 395 to 2129 is interaction with C9orf78 and WBP4; that stretch reads DLDQGGEALA…YKFSVDVKEA (1735 aa). The Helicase ATP-binding 1 domain maps to 490–673; sequence RAALETDENL…FLRVDPAKGL (184 aa). 503–510 provides a ligand contact to ATP; sequence APTGAGKT. Positions 615-618 match the DEAH box motif; that stretch reads DEIH. The Helicase C-terminal 1 domain occupies 684 to 921; that stretch reads PLEQTYVGIT…NAKDAVNWLG (238 aa). The residue at position 709 (Y709) is a Phosphotyrosine. Residue K944 forms a Glycyl lysine isopeptide (Lys-Gly) (interchain with G-Cter in SUMO) linkage. K971 bears the N6-acetyllysine; alternate mark. Residue K971 forms a Glycyl lysine isopeptide (Lys-Gly) (interchain with G-Cter in SUMO); alternate linkage. The 305-residue stretch at 982–1286 folds into the SEC63 1 domain; it reads TELGRIASHY…SCETQLPVSF (305 aa). Glycyl lysine isopeptide (Lys-Gly) (interchain with G-Cter in SUMO) cross-links involve residues K1071 and K1199. An interaction with TSSC4 region spans residues 1282 to 2136; sequence LPVSFRHLIL…KEAETDSDSD (855 aa). Positions 1337–1512 constitute a Helicase ATP-binding 2 domain; sequence NTVYNSDDNV…WLGCSATSTF (176 aa). 1350-1357 provides a ligand contact to ATP; that stretch reads APTGSGKT. Position 1428 is a phosphothreonine (T1428). A DEAH box motif is present at residues 1454–1457; sequence DEVH. Residues 1545–1753 form the Helicase C-terminal 2 domain; sequence PVYHAITKHS…TIENKQDAVD (209 aa). T1765 carries the post-translational modification Phosphothreonine. The 313-residue stretch at 1812-2124 folds into the SEC63 2 domain; that stretch reads PLNLGMIAAY…GCDQEYKFSV (313 aa). The residue at position 2002 (S2002) is a Phosphoserine. Residue K2091 forms a Glycyl lysine isopeptide (Lys-Gly) (interchain with G-Cter in SUMO) linkage. T2131 bears the Phosphothreonine mark. Phosphoserine is present on residues S2133 and S2135.

Belongs to the helicase family. SKI2 subfamily. As to quaternary structure, component of a core complex containing at least PRPF8, SNRNP200, EFTUD2 and SNRNP40. Component of the U5 snRNP and U4/U6-U5 tri-snRNP complexes, building blocks of the spliceosome. Component of the U4/U6-U5 tri-snRNP complex composed of the U4, U6 and U5 snRNAs and at least PRPF3, PRPF4, PRPF6, PRPF8, PRPF31, SNRNP200, TXNL4A, SNRNP40, DDX23, CD2BP2, PPIH, SNU13, EFTUD2, SART1 and USP39. Component of precatalytic, catalytic and postcatalytic spliceosomal complexes. Component of the minor spliceosome, which splices U12-type introns. Interacts with C9orf78; the interaction is direct and mutually exclusive with its interaction with WBP4. Interacts with WBP4; the interaction is mutually exclusive with its interaction with C9orf78. Interacts with PRPF8. Interacts with TSSC4; the interaction is direct, excludes recruitment of C9ORF78 and WBP4 to SNRNP200 and negatively regulates its RNA helicase activity.

Its subcellular location is the nucleus. It carries out the reaction ATP + H2O = ADP + phosphate + H(+). Its function is as follows. Catalyzes the ATP-dependent unwinding of U4/U6 RNA duplices, an essential step in the assembly of a catalytically active spliceosome. Plays a role in pre-mRNA splicing as core component of precatalytic, catalytic and postcatalytic spliceosomal complexes. As a component of the minor spliceosome, involved in the splicing of U12-type introns in pre-mRNAs. Involved in spliceosome assembly, activation and disassembly. Mediates changes in the dynamic network of RNA-RNA interactions in the spliceosome. The polypeptide is U5 small nuclear ribonucleoprotein 200 kDa helicase (Snrnp200) (Mus musculus (Mouse)).